We begin with the raw amino-acid sequence, 246 residues long: Probable aquaporin AqpM (246 aa).

At methionine 1 to glutamate 12 the chain is on the cytoplasmic side. Residues valine 13 to isoleucine 33 traverse the membrane as a helical segment. Residues alanine 34 to tryptophan 56 are Extracellular-facing. The helical transmembrane segment at phenylalanine 57–isoleucine 77 threads the bilayer. The Cytoplasmic segment spans residues serine 78–tyrosine 104. The NPA 1 signature appears at asparagine 83–alanine 85. A helical transmembrane segment spans residues isoleucine 105–proline 125. The Extracellular portion of the chain corresponds to alanine 126 to glutamine 146. A helical membrane pass occupies residues alanine 147 to valine 167. Topologically, residues aspartate 168–proline 173 are cytoplasmic. Residues glycine 174–isoleucine 194 form a helical membrane-spanning segment. The Extracellular portion of the chain corresponds to threonine 195 to asparagine 217. Residues asparagine 200–alanine 202 carry the NPA 2 motif. The helical transmembrane segment at leucine 218–tryptophan 238 threads the bilayer. Over leucine 239–glutamate 246 the chain is Cytoplasmic.

This sequence belongs to the MIP/aquaporin (TC 1.A.8) family.

It localises to the cell membrane. Functionally, channel that permits osmotically driven movement of water in both directions. This chain is Probable aquaporin AqpM (aqpM), found in Archaeoglobus fulgidus (strain ATCC 49558 / DSM 4304 / JCM 9628 / NBRC 100126 / VC-16).